Reading from the N-terminus, the 323-residue chain is Galactosylgalactosylxylosylprotein 3-beta-glucuronosyltransferase 2 (323 aa).

The Cytoplasmic portion of the chain corresponds to 1 to 2 (MK). The helical; Signal-anchor for type II membrane protein transmembrane segment at 3-23 (SALFTRFFILLPWILIVIIML) threads the bilayer. Over 24 to 323 (DVDTRRPVPP…YHLDTVKIEV (300 aa)) the chain is Lumenal. Residues 51–80 (RLPLRRGGPAHGTQKRNQSRPQPQPEPQLP) are disordered. Asn-67 carries N-linked (GlcNAc...) asparagine glycosylation. UDP-alpha-D-glucuronate is bound by residues 87 to 89 (PTY), Asp-118, Arg-155, Arg-160, and 185 to 187 (DDD). Asp-187 serves as a coordination point for Mn(2+). Positions 234-243 (WRADRPFAID) are interaction with galactose moiety of substrate glycoprotein. Residue Glu-273 is the Proton donor/acceptor of the active site. Residue Asn-292 is glycosylated (N-linked (GlcNAc...) asparagine). 300 to 302 (HTR) lines the UDP-alpha-D-glucuronate pocket.

This sequence belongs to the glycosyltransferase 43 family. As to quaternary structure, homodimer. Mn(2+) is required as a cofactor. As to expression, expressed in the trachea, retina, spinal cord, hippocampus and other brain regions, and, at lower levels, in testis and ovary.

It is found in the golgi apparatus membrane. The catalysed reaction is 3-O-(beta-D-galactosyl-(1-&gt;3)-beta-D-galactosyl-(1-&gt;4)-beta-D-xylosyl)-L-seryl-[protein] + UDP-alpha-D-glucuronate = 3-O-(beta-D-GlcA-(1-&gt;3)-beta-D-Gal-(1-&gt;3)-beta-D-Gal-(1-&gt;4)-beta-D-Xyl)-L-seryl-[protein] + UDP + H(+). The protein operates within protein modification; protein glycosylation. In terms of biological role, involved in the biosynthesis of L2/HNK-1 carbohydrate epitope on both glycolipids and glycoproteins. The sequence is that of Galactosylgalactosylxylosylprotein 3-beta-glucuronosyltransferase 2 (B3GAT2) from Homo sapiens (Human).